Here is a 316-residue protein sequence, read N- to C-terminus: Aspartate carbamoyltransferase catalytic subunit (316 aa).

2 residues coordinate carbamoyl phosphate: arginine 56 and threonine 57. Residue lysine 84 coordinates L-aspartate. 3 residues coordinate carbamoyl phosphate: arginine 106, histidine 139, and glutamine 142. Positions 172 and 224 each coordinate L-aspartate. Carbamoyl phosphate is bound by residues glycine 268 and proline 269.

It belongs to the aspartate/ornithine carbamoyltransferase superfamily. ATCase family. Heterododecamer (2C3:3R2) of six catalytic PyrB chains organized as two trimers (C3), and six regulatory PyrI chains organized as three dimers (R2).

It carries out the reaction carbamoyl phosphate + L-aspartate = N-carbamoyl-L-aspartate + phosphate + H(+). It participates in pyrimidine metabolism; UMP biosynthesis via de novo pathway; (S)-dihydroorotate from bicarbonate: step 2/3. In terms of biological role, catalyzes the condensation of carbamoyl phosphate and aspartate to form carbamoyl aspartate and inorganic phosphate, the committed step in the de novo pyrimidine nucleotide biosynthesis pathway. The protein is Aspartate carbamoyltransferase catalytic subunit of Ligilactobacillus salivarius (strain UCC118) (Lactobacillus salivarius).